We begin with the raw amino-acid sequence, 323 residues long: Elongation factor P--(R)-beta-lysine ligase (323 aa).

76–78 (SPE) is a binding site for substrate. ATP contacts are provided by residues 100–102 (RNE) and asparagine 109. Residue tyrosine 118 coordinates substrate. Residue 242–243 (EL) participates in ATP binding. Glutamate 249 lines the substrate pocket. ATP is bound at residue glycine 298.

This sequence belongs to the class-II aminoacyl-tRNA synthetase family. EpmA subfamily. In terms of assembly, homodimer.

It catalyses the reaction D-beta-lysine + L-lysyl-[protein] + ATP = N(6)-((3R)-3,6-diaminohexanoyl)-L-lysyl-[protein] + AMP + diphosphate + H(+). In terms of biological role, with EpmB is involved in the beta-lysylation step of the post-translational modification of translation elongation factor P (EF-P). Catalyzes the ATP-dependent activation of (R)-beta-lysine produced by EpmB, forming a lysyl-adenylate, from which the beta-lysyl moiety is then transferred to the epsilon-amino group of a conserved specific lysine residue in EF-P. The sequence is that of Elongation factor P--(R)-beta-lysine ligase from Actinobacillus succinogenes (strain ATCC 55618 / DSM 22257 / CCUG 43843 / 130Z).